A 229-amino-acid polypeptide reads, in one-letter code: Small ribosomal subunit protein uS3 (229 aa).

One can recognise a KH type-2 domain in the interval 18–87 (IDEYLAKQYY…NPQITITNVE (70 aa)).

This sequence belongs to the universal ribosomal protein uS3 family. Part of the 30S ribosomal subunit.

Functionally, binds the lower part of the 30S subunit head. The polypeptide is Small ribosomal subunit protein uS3 (Saccharolobus solfataricus (strain ATCC 35092 / DSM 1617 / JCM 11322 / P2) (Sulfolobus solfataricus)).